The following is a 305-amino-acid chain: Glycine--tRNA ligase alpha subunit (305 aa).

Belongs to the class-II aminoacyl-tRNA synthetase family. Tetramer of two alpha and two beta subunits.

The protein localises to the cytoplasm. It catalyses the reaction tRNA(Gly) + glycine + ATP = glycyl-tRNA(Gly) + AMP + diphosphate. In Streptococcus uberis (strain ATCC BAA-854 / 0140J), this protein is Glycine--tRNA ligase alpha subunit.